The primary structure comprises 156 residues: ATP synthase subunit b (156 aa).

A helical membrane pass occupies residues 7–27 (LFVQAIVFLILVLFTMKFVWP).

The protein belongs to the ATPase B chain family. As to quaternary structure, F-type ATPases have 2 components, F(1) - the catalytic core - and F(0) - the membrane proton channel. F(1) has five subunits: alpha(3), beta(3), gamma(1), delta(1), epsilon(1). F(0) has three main subunits: a(1), b(2) and c(10-14). The alpha and beta chains form an alternating ring which encloses part of the gamma chain. F(1) is attached to F(0) by a central stalk formed by the gamma and epsilon chains, while a peripheral stalk is formed by the delta and b chains.

It is found in the cell inner membrane. In terms of biological role, f(1)F(0) ATP synthase produces ATP from ADP in the presence of a proton or sodium gradient. F-type ATPases consist of two structural domains, F(1) containing the extramembraneous catalytic core and F(0) containing the membrane proton channel, linked together by a central stalk and a peripheral stalk. During catalysis, ATP synthesis in the catalytic domain of F(1) is coupled via a rotary mechanism of the central stalk subunits to proton translocation. Functionally, component of the F(0) channel, it forms part of the peripheral stalk, linking F(1) to F(0). The chain is ATP synthase subunit b from Delftia acidovorans (strain DSM 14801 / SPH-1).